The primary structure comprises 310 residues: Homoserine kinase (310 aa).

ATP is bound at residue 91 to 101 (PIGSGLGSSAC).

Belongs to the GHMP kinase family. Homoserine kinase subfamily.

It localises to the cytoplasm. The enzyme catalyses L-homoserine + ATP = O-phospho-L-homoserine + ADP + H(+). It participates in amino-acid biosynthesis; L-threonine biosynthesis; L-threonine from L-aspartate: step 4/5. Its function is as follows. Catalyzes the ATP-dependent phosphorylation of L-homoserine to L-homoserine phosphate. The polypeptide is Homoserine kinase (Escherichia coli O139:H28 (strain E24377A / ETEC)).